The primary structure comprises 388 residues: Outer membrane protein assembly factor BamB (388 aa).

A signal peptide spans 1–17; the sequence is MVLSLLSVMLLSGYKFL.

It belongs to the BamB family. As to quaternary structure, part of the Bam complex, which is composed of the outer membrane protein BamA, and four lipoproteins BamB, BamC, BamD and BamE.

It is found in the cell outer membrane. In terms of biological role, part of the outer membrane protein assembly complex, which is involved in assembly and insertion of beta-barrel proteins into the outer membrane. The chain is Outer membrane protein assembly factor BamB from Moranella endobia (strain PCIT).